The primary structure comprises 215 residues: RNA pyrophosphohydrolase (215 aa).

The 144-residue stretch at 6-149 (GFRPNVGIIL…KRDVYQLALT (144 aa)) folds into the Nudix hydrolase domain. A Nudix box motif is present at residues 38–59 (GGIKYGETPMQAMYRELHEETG).

This sequence belongs to the Nudix hydrolase family. RppH subfamily. It depends on a divalent metal cation as a cofactor.

Accelerates the degradation of transcripts by removing pyrophosphate from the 5'-end of triphosphorylated RNA, leading to a more labile monophosphorylated state that can stimulate subsequent ribonuclease cleavage. The polypeptide is RNA pyrophosphohydrolase (Burkholderia multivorans (strain ATCC 17616 / 249)).